Consider the following 225-residue polypeptide: Small ribosomal subunit protein uS2 (225 aa).

Over residues 1–14 (MAEAKPAPEKEAAA) the composition is skewed to basic and acidic residues. The disordered stretch occupies residues 1–33 (MAEAKPAPEKEAAAKTESVPVETEGEGPSVKEG).

The protein belongs to the universal ribosomal protein uS2 family.

This is Small ribosomal subunit protein uS2 from Methanosarcina barkeri (strain Fusaro / DSM 804).